The following is a 161-amino-acid chain: Non-specific lipid transfer protein GPI-anchored 24 (161 aa).

The first 23 residues, 1–23, serve as a signal peptide directing secretion; it reads MAQTTTLILLLATLLVAATTVSG. 4 disulfide bridges follow: C42–C79, C49–C63, C64–C104, and C77–C113. An N-linked (GlcNAc...) asparagine glycan is attached at N92. Residue D138 is the site of GPI-anchor amidated aspartate attachment. The propeptide at 139–161 is removed in mature form; sequence AASKLAGTGLVGIVVITIAAMFY.

Belongs to the plant LTP family.

It localises to the cell membrane. Its function is as follows. Probable lipid transfer protein. This chain is Non-specific lipid transfer protein GPI-anchored 24, found in Arabidopsis thaliana (Mouse-ear cress).